A 772-amino-acid chain; its full sequence is Calcium-binding mitochondrial carrier protein (772 aa).

The tract at residues 1–377 (MFANRVRQAQ…SISDFEKSTG (377 aa)) is N-terminal domain. EF-hand domains are found at residues 132-165 (LDAD…ELMA), 166-201 (KPEA…SLDP), 235-270 (LQQE…VKLR), and 347-382 (ITPL…NINK). Asp-145, Asp-147, Thr-149, Tyr-151, Glu-156, Asp-179, Asp-181, Asn-183, Tyr-185, and Asp-190 together coordinate Ca(2+). Ca(2+) is bound by residues Asp-360, Asn-362, Asp-364, Lys-366, and Asp-371. Residues 378-422 (LNINKIGGGTNYSDSYPSDSHVTIQNSSTTPSPSTPITNTAAAIA) are linker loop domain. The segment at 432–720 (AQQVLESIEN…KALLPDAEYK (289 aa)) is carrier domain. Solcar repeat units follow at residues 436-526 (LESI…LRDL), 535-616 (IYFP…MKTI), and 624-712 (LGPM…LQKA). 6 helical membrane-spanning segments follow: residues 442–459 (FALG…VYPI), 501–520 (GILP…LTVN), 545–558 (GFAG…TNPL), 591–610 (GAGA…FPTY), 630–647 (LLAG…VTPA), and 687–706 (GALA…LVSY). Residues 721 to 772 (PPTNAPITQKDFDVIRGNTNTVQRVIDMESKFGTLHQTRDNNKSSNGGENKN) are C-terminal domain. Positions 751–772 (KFGTLHQTRDNNKSSNGGENKN) are disordered. A compositionally biased stretch (low complexity) spans 763–772 (KSSNGGENKN).

Belongs to the mitochondrial carrier (TC 2.A.29) family. Homodimer (via N-terminus).

Its subcellular location is the mitochondrion inner membrane. In terms of biological role, mitochondrial and calcium-binding carrier that catalyzes the calcium-dependent exchange of cytoplasmic glutamate with mitochondrial aspartate across the mitochondrial inner membrane. The sequence is that of Calcium-binding mitochondrial carrier protein (mcfO) from Dictyostelium discoideum (Social amoeba).